A 491-amino-acid polypeptide reads, in one-letter code: Katanin p60 ATPase-containing subunit A1 (491 aa).

The interval 1–29 is interaction with KATNB1; that stretch reads MSLLMISENVKLAREYALLGNYDSAMVYY. Residues 1-75 form an interaction with dynein and NDEL1 region; that stretch reads MSLLMISENV…VKDIMKTLES (75 aa). An interaction with microtubules region spans residues 1-185; it reads MSLLMISENV…EPETNKFDST (185 aa). Ser-42 and Ser-109 each carry phosphoserine; by DYRK2. A disordered region spans residues 87–185; the sequence is QHDLPASEGE…EPETNKFDST (99 aa). Thr-133 bears the Phosphothreonine; by DYRK2 mark. The span at 145–169 shows a compositional bias: basic and acidic residues; that stretch reads HNDRGKAVRCREKKEQNKGREEKNK. Ser-170 carries the post-translational modification Phosphoserine. 249–256 is a binding site for ATP; sequence GPPGTGKT.

This sequence belongs to the AAA ATPase family. Katanin p60 subunit A1 subfamily. In terms of assembly, can homooligomerize into hexameric rings, which may be promoted by interaction with microtubules. Interacts with KATNB1, which may serve as a targeting subunit. Interacts with ASPM; the katanin complex formation KATNA1:KATNB1 is required for the association of ASPM Interacts with dynein and NDEL1. Associates with the E3 ligase complex containing DYRK2, EDD/UBR5, DDB1 and DCAF1 proteins (EDVP complex). Interacts with KLHL42 (via the kelch domains). Interacts with CUL3; the interaction is enhanced by KLHL42. Interacts with KATNB1 and KATNBL1. Interacts with CAMSAP2 and CAMSAP3; leading to regulate the length of CAMSAP-decorated microtubule stretches. Phosphorylation by DYRK2 triggers ubiquitination and subsequent degradation. In terms of processing, ubiquitinated by the BCR(KLHL42) E3 ubiquitin ligase complex, leading to its proteasomal degradation. Ubiquitinated by the EDVP E3 ligase complex and subsequently targeted for proteasomal degradation.

The protein localises to the cytoplasm. It is found in the midbody. It localises to the cytoskeleton. Its subcellular location is the microtubule organizing center. The protein resides in the centrosome. The protein localises to the spindle pole. It is found in the spindle. The catalysed reaction is n ATP + n H2O + a microtubule = n ADP + n phosphate + (n+1) alpha/beta tubulin heterodimers.. With respect to regulation, ATPase activity is stimulated by microtubules, which promote homooligomerization. ATP-dependent microtubule severing is stimulated by interaction with KATNB1. Catalytic subunit of a complex which severs microtubules in an ATP-dependent manner. Microtubule severing may promote rapid reorganization of cellular microtubule arrays and the release of microtubules from the centrosome following nucleation. Microtubule release from the mitotic spindle poles may allow depolymerization of the microtubule end proximal to the spindle pole, leading to poleward microtubule flux and poleward motion of chromosome. Microtubule release within the cell body of neurons may be required for their transport into neuronal processes by microtubule-dependent motor proteins. This transport is required for axonal growth. The polypeptide is Katanin p60 ATPase-containing subunit A1 (Macaca fascicularis (Crab-eating macaque)).